The sequence spans 128 residues: Large ribosomal subunit protein bL17 (128 aa).

Belongs to the bacterial ribosomal protein bL17 family. In terms of assembly, part of the 50S ribosomal subunit. Contacts protein L32.

The protein is Large ribosomal subunit protein bL17 of Vibrio cholerae serotype O1 (strain ATCC 39541 / Classical Ogawa 395 / O395).